The chain runs to 466 residues: Ankyrin repeat and SOCS box protein 18 (466 aa).

ANK repeat units follow at residues 119–148 (ELTTPLCIAAAHGHTACVRHLLGRGADPDA), 151–180 (GGRGALHEACLGGHTACVRLLLQHRADPDL), 184–213 (EGLAPLHLCRTAASLGCAQALLEHGASVQR), 218–247 (GRDTPLHVAAQRGLDEHARLYLGRGAHVDA), 251–288 (RGETALSAACGAARRPDEHGRCLRLCALLLRRGAEADA), and 292–321 (DERSPLHKACGHASHSLARLLLRHGADAGA). Positions 405–463 (QMHKPFYQSLFALALTPRCLQHLCRCALRRLFGKRCFDLIPLLPLPKPLQNYLLLEPQG) constitute an SOCS box domain.

It belongs to the ankyrin SOCS box (ASB) family.

The protein operates within protein modification; protein ubiquitination. May be a substrate-recognition component of a SCF-like ECS (Elongin-Cullin-SOCS-box protein) E3 ubiquitin-protein ligase complex which mediates the ubiquitination and subsequent proteasomal degradation of target proteins. The chain is Ankyrin repeat and SOCS box protein 18 (ASB18) from Homo sapiens (Human).